Consider the following 305-residue polypeptide: tRNA dimethylallyltransferase (305 aa).

8–15 (GPTAVGKT) contributes to the ATP binding site. Substrate is bound at residue 10–15 (TAVGKT). The segment at 33 to 36 (DSRQ) is interaction with substrate tRNA.

Belongs to the IPP transferase family. In terms of assembly, monomer. Mg(2+) is required as a cofactor.

It catalyses the reaction adenosine(37) in tRNA + dimethylallyl diphosphate = N(6)-dimethylallyladenosine(37) in tRNA + diphosphate. Its function is as follows. Catalyzes the transfer of a dimethylallyl group onto the adenine at position 37 in tRNAs that read codons beginning with uridine, leading to the formation of N6-(dimethylallyl)adenosine (i(6)A). The sequence is that of tRNA dimethylallyltransferase from Thermotoga neapolitana (strain ATCC 49049 / DSM 4359 / NBRC 107923 / NS-E).